We begin with the raw amino-acid sequence, 311 residues long: MHCPDKESVYHIPVMLGECLEGLRIDPDGCYVDVTFGGGGHSRAIVEKLSSKGRLYGFDQDADACRNVLQDERFTFVPSNFRYLANFMDYYGEDGVDGILADLGVSSHHFDEEERGFSFRSESPLLDMRMNARAGRNAAAILNEYDASSLSALFYHYGELKQARRLAASIVHYRESLSGGLQTVGQLLEAVRGLISPREEKKQLACIFQALRIEVNDELGALQQMLEAALGCLRSGGRLVVMTYHSLEDRMVKNFLRYGTVKAPDEDSLRLYGAPQSPWQQITRKPLTASTKELSDNPRSRSAKLRIAEKI.

S-adenosyl-L-methionine is bound by residues 39–41 (GGH), Asp-59, Phe-87, Asp-102, and His-109.

This sequence belongs to the methyltransferase superfamily. RsmH family.

It is found in the cytoplasm. It catalyses the reaction cytidine(1402) in 16S rRNA + S-adenosyl-L-methionine = N(4)-methylcytidine(1402) in 16S rRNA + S-adenosyl-L-homocysteine + H(+). In terms of biological role, specifically methylates the N4 position of cytidine in position 1402 (C1402) of 16S rRNA. The protein is Ribosomal RNA small subunit methyltransferase H of Porphyromonas gingivalis (strain ATCC 33277 / DSM 20709 / CIP 103683 / JCM 12257 / NCTC 11834 / 2561).